Consider the following 221-residue polypeptide: Redox-sensing transcriptional repressor Rex (221 aa).

The segment at residues 17-56 (IYYYYLSSLHEAGIKRINSTEISEAIKFDAATVRRDFSYF) is a DNA-binding region (H-T-H motif). 91-96 (GTGNLG) contributes to the NAD(+) binding site.

The protein belongs to the transcriptional regulatory Rex family. As to quaternary structure, homodimer.

The protein resides in the cytoplasm. Functionally, modulates transcription in response to changes in cellular NADH/NAD(+) redox state. This Oenococcus oeni (strain ATCC BAA-331 / PSU-1) protein is Redox-sensing transcriptional repressor Rex.